The sequence spans 44 residues: Photosystem I reaction center subunit IX (44 aa).

Residues 7-27 traverse the membrane as a helical segment; sequence YLSTAPVLATLWFSSLAGLLI.

It belongs to the PsaJ family.

It is found in the plastid. It localises to the chloroplast thylakoid membrane. In terms of biological role, may help in the organization of the PsaE and PsaF subunits. In Welwitschia mirabilis (Tree tumbo), this protein is Photosystem I reaction center subunit IX.